The primary structure comprises 1661 residues: Cortactin-binding protein 2 (1661 aa).

Disordered stretches follow at residues 1–27 (MATDGASCEPDFSRASEDAAEATAEAT), 206–226 (EKKRTNELEEELSTEKRRSTE), 329–438 (TVPV…SLHP), 454–477 (NANDQDQNGNTTQSPPSRDVSPTS), and 493–612 (QALS…LPPK). Positions 124–280 (KMQERMSTQL…EQLKRGNDSK (157 aa)) form a coiled coil. Residues 383–394 (GPSTGSTPDLPS) show a composition bias toward low complexity. Residues 412–426 (SIASQNYSQASSLHS) are compositionally biased toward polar residues. The span at 454–466 (NANDQDQNGNTTQ) shows a compositional bias: low complexity. Positions 467-477 (SPPSRDVSPTS) are enriched in polar residues. Position 497 is an asymmetric dimethylarginine (arginine 497). 5 ANK repeats span residues 707–737 (GRPTLLQQAAAQGNVTLLSMLLNEEGLDINY), 741–770 (DGHSALYSAAKNGHTDCVRLLLNAEAQVNA), 774–803 (NGFTPLCAAAAQGHDKCVELLIAYRANINH), 807–836 (GGQTPLYLACKNGNKECIKLLLEAGTDRSV), and 840–869 (DGWTPVHAAVDTGNVDSLKLLMYHRAPACG). The disordered stretch occupies residues 876-896 (EPESDVFDLDGGGERPEGTVK). An ANK 6 repeat occupies 910 to 940 (EGWTAAHIAASKGFKNCLEILCQHGGLEPER). The segment at 1444 to 1480 (GKKKGENGAWRKVSTSPRKKSGRFPSPTWSKPDLSDE) is disordered. A Phosphoserine modification is found at serine 1522. Disordered stretches follow at residues 1555–1597 (RRFD…SNSK) and 1614–1661 (PRSK…KPNK). Positions 1580 to 1597 (KEVSPLSSHQTTECSNSK) are enriched in polar residues. Low complexity predominate over residues 1622 to 1636 (SQNTRRSSSSSNTRQ). Residues 1643 to 1661 (SKDEIWNLRKNEQVEKPNK) show a composition bias toward basic and acidic residues.

In terms of assembly, interacts with CTTN/cortactin SH3 domain. Interacts with STRN, STRN4/zinedin and MOB4/phocein; this interactions mediate the association with the STRIPAK core complex and may regulate dendritic spine distribution of the STRIPAK complex in hippocampal neurons. Activation of glutamate receptors weakens the interaction with STRN and STRN4.

It localises to the cytoplasm. The protein localises to the cell cortex. It is found in the cell projection. The protein resides in the dendritic spine. Regulates the dendritic spine distribution of CTTN/cortactin in hippocampal neurons, and thus controls dendritic spinogenesis and dendritic spine maintenance. Associates with the striatin-interacting phosphatase and kinase (STRIPAK) core complex to regulate dendritic spine distribution of the STRIPAK complex in hippocampal neurons. The protein is Cortactin-binding protein 2 (CTTNBP2) of Loxodonta africana (African elephant).